Reading from the N-terminus, the 319-residue chain is UDP-N-acetylenolpyruvoylglucosamine reductase (319 aa).

Residues 35-198 (VGGPAEAMFK…TGCVLAGRPD (164 aa)) form the FAD-binding PCMH-type domain. Arg178 is a catalytic residue. Catalysis depends on Ser227, which acts as the Proton donor. Residue Glu302 is part of the active site.

Belongs to the MurB family. It depends on FAD as a cofactor.

It is found in the cytoplasm. It carries out the reaction UDP-N-acetyl-alpha-D-muramate + NADP(+) = UDP-N-acetyl-3-O-(1-carboxyvinyl)-alpha-D-glucosamine + NADPH + H(+). Its pathway is cell wall biogenesis; peptidoglycan biosynthesis. Cell wall formation. This is UDP-N-acetylenolpyruvoylglucosamine reductase from Rhodospirillum rubrum (strain ATCC 11170 / ATH 1.1.1 / DSM 467 / LMG 4362 / NCIMB 8255 / S1).